The chain runs to 120 residues: Phosphoribosyl-AMP cyclohydrolase (120 aa).

D75 serves as a coordination point for Mg(2+). Residue C76 participates in Zn(2+) binding. Mg(2+)-binding residues include D77 and D79. 2 residues coordinate Zn(2+): C92 and C99.

This sequence belongs to the PRA-CH family. Homodimer. Requires Mg(2+) as cofactor. It depends on Zn(2+) as a cofactor.

It localises to the cytoplasm. The catalysed reaction is 1-(5-phospho-beta-D-ribosyl)-5'-AMP + H2O = 1-(5-phospho-beta-D-ribosyl)-5-[(5-phospho-beta-D-ribosylamino)methylideneamino]imidazole-4-carboxamide. The protein operates within amino-acid biosynthesis; L-histidine biosynthesis; L-histidine from 5-phospho-alpha-D-ribose 1-diphosphate: step 3/9. Catalyzes the hydrolysis of the adenine ring of phosphoribosyl-AMP. This Haloarcula marismortui (strain ATCC 43049 / DSM 3752 / JCM 8966 / VKM B-1809) (Halobacterium marismortui) protein is Phosphoribosyl-AMP cyclohydrolase.